Here is a 207-residue protein sequence, read N- to C-terminus: DNA-directed RNA polymerase subunit alpha (207 aa).

The protein belongs to the RNA polymerase alpha chain family. As to quaternary structure, in plastids the minimal PEP RNA polymerase catalytic core is composed of four subunits: alpha, beta, beta', and beta''. When a (nuclear-encoded) sigma factor is associated with the core the holoenzyme is formed, which can initiate transcription.

It is found in the plastid. Its subcellular location is the chloroplast. It carries out the reaction RNA(n) + a ribonucleoside 5'-triphosphate = RNA(n+1) + diphosphate. In terms of biological role, DNA-dependent RNA polymerase catalyzes the transcription of DNA into RNA using the four ribonucleoside triphosphates as substrates. This is DNA-directed RNA polymerase subunit alpha (rpoA) from Euglena anabaena (Euglenaria anabaena).